Here is a 259-residue protein sequence, read N- to C-terminus: Putative zinc metalloprotease Rip2 (259 aa).

The next 2 membrane-spanning stretches (helical) occupy residues 14 to 34 and 39 to 59; these read PIFLGLLGLTAVGGALAWLAG and PLAYAGVFVMVIAGWLVSLCL. His-60 contributes to the Zn(2+) binding site. Glu-61 is an active-site residue. His-64 lines the Zn(2+) pocket. A run of 4 helical transmembrane segments spans residues 97-117, 128-148, 156-176, and 211-231; these read GLPMLFIALGGIGLPGAAVYV, TLVSLAGPTVNLALAMLLLAA, IHAVLWAGVAFLAFLQLTALV, and LVFLLVLFLAPTLNGWFFGVV.

Belongs to the peptidase M50B family. Zn(2+) is required as a cofactor.

Its subcellular location is the cell membrane. This Mycobacterium tuberculosis (strain ATCC 25618 / H37Rv) protein is Putative zinc metalloprotease Rip2 (rip2).